The primary structure comprises 180 residues: Beta-lactoglobulin (180 aa).

The first 18 residues, 1–18 (MKCLLLALGLALACGIQA), serve as a signal peptide directing secretion. Disulfide bonds link Cys-84/Cys-178, Cys-124/Cys-137, and Cys-124/Cys-139.

Belongs to the calycin superfamily. Lipocalin family. In terms of assembly, under physiological conditions beta-lactoglobulin exists as an equilibrium mixture of monomeric and dimeric forms. Interaction with LMBR1L is controversial. In terms of processing, alternate disulfide bonds occur in equal amounts. Synthesized in mammary gland and secreted in milk.

The protein resides in the secreted. In terms of biological role, primary component of whey, it binds retinol and is probably involved in the transport of that molecule. This is Beta-lactoglobulin (LGB) from Capra hircus (Goat).